We begin with the raw amino-acid sequence, 297 residues long: uncharacterized protein (297 aa).

Residues 267–297 (NTQHAGKPGAQHRTRRSPPAFRRADRLRQSA) form a disordered region. Basic and acidic residues predominate over residues 288 to 297 (RRADRLRQSA).

This is an uncharacterized protein from Treponema pallidum (strain Nichols).